The sequence spans 134 residues: Transcription antitermination protein NusB (134 aa).

The protein belongs to the NusB family.

In terms of biological role, involved in transcription antitermination. Required for transcription of ribosomal RNA (rRNA) genes. Binds specifically to the boxA antiterminator sequence of the ribosomal RNA (rrn) operons. The chain is Transcription antitermination protein NusB from Halothermothrix orenii (strain H 168 / OCM 544 / DSM 9562).